The following is a 135-amino-acid chain: Actin-related protein 2/3 complex subunit 5B (135 aa).

It belongs to the ARPC5 family. Component of the Arp2/3 complex composed of ARP2, ARP3, ARPC1/p41-ARC, ARPC2/p34-ARC, ARPC3/p21-ARC, ARPC4/p20-ARC and ARPC5/p16-ARC.

The protein resides in the cytoplasm. It localises to the cytoskeleton. Its subcellular location is the cell projection. Functionally, functions as a component of the Arp2/3 complex which is involved in regulation of actin polymerization and together with an activating nucleation-promoting factor (NPF) mediates the formation of branched actin networks. Arp2/3 complex plays a critical role in the control of cell morphogenesis via the modulation of cell polarity development. The protein is Actin-related protein 2/3 complex subunit 5B (ARPC5B) of Arabidopsis thaliana (Mouse-ear cress).